The primary structure comprises 154 residues: Aspartate carbamoyltransferase regulatory chain (154 aa).

Residues C109, C114, C138, and C141 each coordinate Zn(2+).

Belongs to the PyrI family. Contains catalytic and regulatory chains. The cofactor is Zn(2+).

Its function is as follows. Involved in allosteric regulation of aspartate carbamoyltransferase. The polypeptide is Aspartate carbamoyltransferase regulatory chain (Aliivibrio fischeri (strain ATCC 700601 / ES114) (Vibrio fischeri)).